Reading from the N-terminus, the 297-residue chain is Protease HtpX homolog (297 aa).

Helical transmembrane passes span 5-25 (IFLFILTNLLVITTIGIVLTI) and 43-63 (LMALLVFSLVVGFVGSFISLG). Histidine 154 contributes to the Zn(2+) binding site. Residue glutamate 155 is part of the active site. Histidine 158 is a binding site for Zn(2+). A run of 2 helical transmembrane segments spans residues 169–189 (LLQGIVNTFVVFLSRIAAWVA) and 203–223 (FIAMIVFQIIFSILGSLVVFA). Glutamate 229 is a binding site for Zn(2+).

This sequence belongs to the peptidase M48B family. Requires Zn(2+) as cofactor.

Its subcellular location is the cell membrane. The sequence is that of Protease HtpX homolog from Bacillus velezensis (strain DSM 23117 / BGSC 10A6 / LMG 26770 / FZB42) (Bacillus amyloliquefaciens subsp. plantarum).